Here is a 167-residue protein sequence, read N- to C-terminus: MNSMLNPNAVPCQPSPQVVAIPMQYPSGFSPGFRRQRNPGFRPMFNRRRNNNGNQNRGRQNRQRVQNNNRGNIRNRQNNGQRGNRRQYNQPSPNVPFEQQLLMMANETAYAATYPPEMQNVAPTKLVKIAKRAAMQIVSGHATVEISNGTEDSNKRVATFTIKVVMN.

Positions 28–94 (GFSPGFRRQR…RRQYNQPSPN (67 aa)) are disordered. An involved in nuclear and nucleolar localization region spans residues 31-62 (PGFRRQRNPGFRPMFNRRRNNNGNQNRGRQNR). A compositionally biased stretch (low complexity) spans 51-90 (NNGNQNRGRQNRQRVQNNNRGNIRNRQNNGQRGNRRQYNQ). The short motif at 153-162 (SNKRVATFTI) is the Nuclear export signal element.

It belongs to the torovirinae nucleoprotein family.

The protein localises to the virion. It is found in the host nucleus. Its subcellular location is the host nucleoplasm. It localises to the host nucleolus. Functionally, major structural component of virions that associates with genomic RNA. This chain is Nucleoprotein (N), found in Breda virus 1 (BRV-1).